Here is a 228-residue protein sequence, read N- to C-terminus: Endo-1,4-beta-xylanase B (228 aa).

The first 19 residues, 1 to 19 (MVSFTYLLAAVSAVTGAVA), serve as a signal peptide directing secretion. Residues 37 to 227 (KRTSPTTGVN…SSGQATMTVS (191 aa)) enclose the GH11 domain. Glu-122 serves as the catalytic Nucleophile. The active-site Proton donor is the Glu-214.

It belongs to the glycosyl hydrolase 11 (cellulase G) family.

The protein resides in the secreted. It catalyses the reaction Endohydrolysis of (1-&gt;4)-beta-D-xylosidic linkages in xylans.. It participates in glycan degradation; xylan degradation. Inhibited by the proteinaceous endoxylanase inhibitor I from T.aestivum (TAXI-I). Functionally, endo-1,4-beta-xylanase involved in the hydrolysis of xylan, a major structural heterogeneous polysaccharide found in plant biomass representing the second most abundant polysaccharide in the biosphere, after cellulose. Plays an important role in causing fusarium head blight (FHB) on cereal crops. Induces cell death and hydrogen peroxide accumulation in infected wheat leaves. The protein is Endo-1,4-beta-xylanase B (XYLB) of Gibberella zeae (strain ATCC MYA-4620 / CBS 123657 / FGSC 9075 / NRRL 31084 / PH-1) (Wheat head blight fungus).